Reading from the N-terminus, the 533-residue chain is CTP synthase (533 aa).

An amidoligase domain region spans residues 1 to 269 (MKKNLKILVI…HEILSSKLNI (269 aa)). A CTP-binding site is contributed by S16. S16 provides a ligand contact to UTP. ATP-binding positions include 17–22 (GIGKGV) and D73. Positions 73 and 143 each coordinate Mg(2+). Residues 150 to 152 (DME), 190 to 195 (KSKPTQ), and K226 contribute to the CTP site. UTP contacts are provided by residues 190 to 195 (KSKPTQ) and K226. The region spanning 304-533 (YAELDDSYAS…LFLGLIKACI (230 aa)) is the Glutamine amidotransferase type-1 domain. G355 lines the L-glutamine pocket. Catalysis depends on C382, which acts as the Nucleophile; for glutamine hydrolysis. Residues 383 to 386 (LGLQ), E406, and R466 each bind L-glutamine. Residues H511 and E513 contribute to the active site.

This sequence belongs to the CTP synthase family. In terms of assembly, homotetramer.

It carries out the reaction UTP + L-glutamine + ATP + H2O = CTP + L-glutamate + ADP + phosphate + 2 H(+). It catalyses the reaction L-glutamine + H2O = L-glutamate + NH4(+). The enzyme catalyses UTP + NH4(+) + ATP = CTP + ADP + phosphate + 2 H(+). Its pathway is pyrimidine metabolism; CTP biosynthesis via de novo pathway; CTP from UDP: step 2/2. Its activity is regulated as follows. Allosterically activated by GTP, when glutamine is the substrate; GTP has no effect on the reaction when ammonia is the substrate. The allosteric effector GTP functions by stabilizing the protein conformation that binds the tetrahedral intermediate(s) formed during glutamine hydrolysis. Inhibited by the product CTP, via allosteric rather than competitive inhibition. Catalyzes the ATP-dependent amination of UTP to CTP with either L-glutamine or ammonia as the source of nitrogen. Regulates intracellular CTP levels through interactions with the four ribonucleotide triphosphates. This chain is CTP synthase, found in Borreliella afzelii (strain PKo) (Borrelia afzelii).